Consider the following 232-residue polypeptide: Sugar fermentation stimulation protein homolog (232 aa).

It belongs to the SfsA family.

This is Sugar fermentation stimulation protein homolog from Magnetococcus marinus (strain ATCC BAA-1437 / JCM 17883 / MC-1).